A 514-amino-acid polypeptide reads, in one-letter code: Serine--tRNA ligase, cytoplasmic (514 aa).

The residue at position 1 (Met-1) is an N-acetylmethionine. Residues 9 to 61 are interaction with tRNA; it reads RVDKGGDPALIRESQEKRFKDPGLVDQLVKADSEWRRCRFRADNLNKLKNLCS. Ser-241 bears the Phosphoserine mark. Positions 271 and 302 each coordinate L-serine. ATP contacts are provided by residues 302–304 and 318–321; these read RQE and VHQF. At Lys-323 the chain carries N6-acetyllysine. Glu-325 is an L-serine binding site. 391 to 394 serves as a coordination point for ATP; the sequence is ELVS. L-serine is bound at residue Asn-427. The disordered stretch occupies residues 475-514; the sequence is PIDQEPSKKQKKQHEGSKKKGAARDVALESQLQNMEVTDA. Over residues 479-501 the composition is skewed to basic and acidic residues; sequence EPSKKQKKQHEGSKKKGAARDVA. Residues 482 to 494 carry the Nuclear localization signal motif; that stretch reads KKQKKQHEGSKKK. Over residues 504–514 the composition is skewed to polar residues; it reads SQLQNMEVTDA.

The protein belongs to the class-II aminoacyl-tRNA synthetase family. Type-1 seryl-tRNA synthetase subfamily. Homodimer. The tRNA molecule may bind across the dimer. Interacts with SIRT2. Interacts with METTL6; interaction is required for the tRNA N(3)-methylcytidine methyltransferase activity of METTL6.

Its subcellular location is the cytoplasm. It localises to the nucleus. It carries out the reaction tRNA(Ser) + L-serine + ATP = L-seryl-tRNA(Ser) + AMP + diphosphate + H(+). The catalysed reaction is tRNA(Sec) + L-serine + ATP = L-seryl-tRNA(Sec) + AMP + diphosphate + H(+). It participates in aminoacyl-tRNA biosynthesis; selenocysteinyl-tRNA(Sec) biosynthesis; L-seryl-tRNA(Sec) from L-serine and tRNA(Sec): step 1/1. In terms of biological role, catalyzes the attachment of serine to tRNA(Ser) in a two-step reaction: serine is first activated by ATP to form Ser-AMP and then transferred to the acceptor end of tRNA(Ser). Is probably also able to aminoacylate tRNA(Sec) with serine, to form the misacylated tRNA L-seryl-tRNA(Sec), which will be further converted into selenocysteinyl-tRNA(Sec). In the nucleus, binds to the VEGFA core promoter and prevents MYC binding and transcriptional activation by MYC. Recruits SIRT2 to the VEGFA promoter, promoting deacetylation of histone H4 at 'Lys-16' (H4K16). Thereby, inhibits the production of VEGFA and sprouting angiogenesis mediated by VEGFA. The protein is Serine--tRNA ligase, cytoplasmic (SARS1) of Bos taurus (Bovine).